The primary structure comprises 226 residues: Uridylate kinase (226 aa).

9–13 (KVSGK) is a binding site for ATP. Gly46 lines the UMP pocket. ATP contacts are provided by Gly47 and Arg51. Residues Asp68 and 116 to 122 (FQPGQST) contribute to the UMP site. 3 residues coordinate ATP: Thr142, Tyr148, and Asp151.

Belongs to the UMP kinase family. In terms of assembly, homohexamer.

It is found in the cytoplasm. It carries out the reaction UMP + ATP = UDP + ADP. It functions in the pathway pyrimidine metabolism; CTP biosynthesis via de novo pathway; UDP from UMP (UMPK route): step 1/1. With respect to regulation, inhibited by UTP. In terms of biological role, catalyzes the reversible phosphorylation of UMP to UDP. The protein is Uridylate kinase of Hyperthermus butylicus (strain DSM 5456 / JCM 9403 / PLM1-5).